We begin with the raw amino-acid sequence, 315 residues long: Replication factor C small subunit (315 aa).

43 to 50 serves as a coordination point for ATP; sequence GSPGVGKT.

It belongs to the activator 1 small subunits family. RfcS subfamily. Heteromultimer composed of small subunits (RfcS) and large subunits (RfcL).

In terms of biological role, part of the RFC clamp loader complex which loads the PCNA sliding clamp onto DNA. The polypeptide is Replication factor C small subunit (Methanococcus maripaludis (strain C7 / ATCC BAA-1331)).